Consider the following 50-residue polypeptide: Gene 38 protein (50 aa).

The polypeptide is Gene 38 protein (38) (Mycobacterium (Mycobacteriophage D29)).